The chain runs to 427 residues: Enolase (427 aa).

A (2R)-2-phosphoglycerate-binding site is contributed by Q163. Catalysis depends on E205, which acts as the Proton donor. Mg(2+) is bound by residues D242, E285, and D312. (2R)-2-phosphoglycerate is bound by residues K337, R366, S367, and K388. The active-site Proton acceptor is K337.

Belongs to the enolase family. Mg(2+) serves as cofactor.

It is found in the cytoplasm. It localises to the secreted. The protein resides in the cell surface. It catalyses the reaction (2R)-2-phosphoglycerate = phosphoenolpyruvate + H2O. It functions in the pathway carbohydrate degradation; glycolysis; pyruvate from D-glyceraldehyde 3-phosphate: step 4/5. In terms of biological role, catalyzes the reversible conversion of 2-phosphoglycerate (2-PG) into phosphoenolpyruvate (PEP). It is essential for the degradation of carbohydrates via glycolysis. The polypeptide is Enolase (Albidiferax ferrireducens (strain ATCC BAA-621 / DSM 15236 / T118) (Rhodoferax ferrireducens)).